The sequence spans 391 residues: Formate-dependent phosphoribosylglycinamide formyltransferase (391 aa).

N(1)-(5-phospho-beta-D-ribosyl)glycinamide is bound by residues 18 to 19 (EL) and Glu-78. Residues Arg-110, Lys-151, 156–161 (SSGKGQ), 191–194 (EEFI), and Glu-199 contribute to the ATP site. One can recognise an ATP-grasp domain in the interval 115-305 (DLASKDLKIK…EFELHLRAFL (191 aa)). Positions 264 and 276 each coordinate Mg(2+). Residues Asp-283, Lys-353, and 360–361 (RR) contribute to the N(1)-(5-phospho-beta-D-ribosyl)glycinamide site.

The protein belongs to the PurK/PurT family. In terms of assembly, homodimer.

The enzyme catalyses N(1)-(5-phospho-beta-D-ribosyl)glycinamide + formate + ATP = N(2)-formyl-N(1)-(5-phospho-beta-D-ribosyl)glycinamide + ADP + phosphate + H(+). It participates in purine metabolism; IMP biosynthesis via de novo pathway; N(2)-formyl-N(1)-(5-phospho-D-ribosyl)glycinamide from N(1)-(5-phospho-D-ribosyl)glycinamide (formate route): step 1/1. Its function is as follows. Involved in the de novo purine biosynthesis. Catalyzes the transfer of formate to 5-phospho-ribosyl-glycinamide (GAR), producing 5-phospho-ribosyl-N-formylglycinamide (FGAR). Formate is provided by PurU via hydrolysis of 10-formyl-tetrahydrofolate. The chain is Formate-dependent phosphoribosylglycinamide formyltransferase from Prochlorococcus marinus (strain AS9601).